We begin with the raw amino-acid sequence, 384 residues long: MYTKKPTIPENVIERAYKGKCTKEDALLLLEGNPFELFELANDLRAIAAGDTVSYVVNRNIYITNKCVGNCGFCAYRTEKGYILSIEEILKKAGDARKAGAVEVCVQGGYTPEADMEFYLEVIESLKAEYPDLCLHALSPMEVNYAAETSGMSVEEALRRLKKSGLDSLTGTSAEILSDRVRKIICPSKISTQQWIDTVTAAHKAGISTNATIMYGHVETLKERLDHVFTIREIQKETGGFTELIPMSFLPYNNPVGEKMLASGKFSSTGLEDLQLIAISRVILHTYVKNIQATWVKLGKKLAQVALQCGANDLGGTLMEDQISTASGGSHGEYVSPAEFEWMIKGAGRVPVQRDTLYRKIESGFPGQEGLFPGYAKAGMGSKE.

The Radical SAM core domain maps to 53-286 (VSYVVNRNIY…IAISRVILHT (234 aa)). Residues Cys-67, Cys-71, and Cys-74 each contribute to the [4Fe-4S] cluster site.

The protein belongs to the radical SAM superfamily. CofH family. Consists of two subunits, CofG and CofH. The cofactor is [4Fe-4S] cluster.

The enzyme catalyses 5-amino-6-(D-ribitylamino)uracil + L-tyrosine + S-adenosyl-L-methionine = 5-amino-5-(4-hydroxybenzyl)-6-(D-ribitylimino)-5,6-dihydrouracil + 2-iminoacetate + 5'-deoxyadenosine + L-methionine + H(+). Its pathway is cofactor biosynthesis; coenzyme F0 biosynthesis. Catalyzes the radical-mediated synthesis of 5-amino-5-(4-hydroxybenzyl)-6-(D-ribitylimino)-5,6-dihydrouracil from 5-amino-6-(D-ribitylamino)uracil and L-tyrosine. In Methanosarcina mazei (strain ATCC BAA-159 / DSM 3647 / Goe1 / Go1 / JCM 11833 / OCM 88) (Methanosarcina frisia), this protein is 5-amino-6-(D-ribitylamino)uracil--L-tyrosine 4-hydroxyphenyl transferase 2.